The chain runs to 690 residues: Elongation factor G (690 aa).

The tr-type G domain occupies 8-282 (ERVRNIGIAA…AVIDYLPAPV (275 aa)). GTP is bound by residues 17–24 (AHIDAGKT), 81–85 (DTPGH), and 135–138 (NKMD).

This sequence belongs to the TRAFAC class translation factor GTPase superfamily. Classic translation factor GTPase family. EF-G/EF-2 subfamily.

It localises to the cytoplasm. Catalyzes the GTP-dependent ribosomal translocation step during translation elongation. During this step, the ribosome changes from the pre-translocational (PRE) to the post-translocational (POST) state as the newly formed A-site-bound peptidyl-tRNA and P-site-bound deacylated tRNA move to the P and E sites, respectively. Catalyzes the coordinated movement of the two tRNA molecules, the mRNA and conformational changes in the ribosome. This chain is Elongation factor G, found in Parasynechococcus marenigrum (strain WH8102).